The following is a 104-amino-acid chain: Large ribosomal subunit protein bL21 (104 aa).

Belongs to the bacterial ribosomal protein bL21 family. Part of the 50S ribosomal subunit. Contacts protein L20.

Functionally, this protein binds to 23S rRNA in the presence of protein L20. This is Large ribosomal subunit protein bL21 from Gluconobacter oxydans (strain 621H) (Gluconobacter suboxydans).